A 548-amino-acid chain; its full sequence is Synaptic vesicle 2-related protein (548 aa).

The Cytoplasmic portion of the chain corresponds to 1 to 87; that stretch reads MEEDLFQLRQ…GFGKFQWKLS (87 aa). A phosphoserine mark is found at S25 and S31. A helical membrane pass occupies residues 88–108; it reads VLTGLAWMADAMEMMILSILA. Topologically, residues 109-122 are vesicular; that stretch reads PQLHCEWRLPSWQV. Residues 123 to 143 form a helical membrane-spanning segment; sequence ALLTSVVFVGMMSSSTLWGNI. Residues 144 to 156 lie on the Cytoplasmic side of the membrane; it reads SDQYGRKTGLKIS. A helical membrane pass occupies residues 157–177; that stretch reads VLWTLYYGILSAFAPVYSWIL. The Vesicular portion of the chain corresponds to 178 to 180; the sequence is VLR. Residues 181-201 traverse the membrane as a helical segment; it reads GLVGFGIGGVPQSVTLYAEFL. Topologically, residues 202–209 are cytoplasmic; the sequence is PMKARAKC. A helical membrane pass occupies residues 210–230; that stretch reads ILLIEVFWAIGTVFEVVLAVF. Residues 231-238 are Vesicular-facing; that stretch reads VMPSLGWR. The helical transmembrane segment at 239 to 259 threads the bilayer; that stretch reads WLLILSAVPLLLFAVLCFWLP. The Cytoplasmic segment spans residues 260–316; sequence ESARYDVLSGNQEKAIATLKRIATENGAPMPLGKLIISRQEDRGKMRDLFTPHFRWT. Residues 317 to 337 form a helical membrane-spanning segment; the sequence is TLLLWFIWFSNAFSYYGLVLL. Over 338 to 373 the chain is Vesicular; sequence TTELFQAGDVCSISSRKKAVEAKCSLACEYLSEEDY. The chain crosses the membrane as a helical span at residues 374 to 394; the sequence is MDLLWTTLSEFPGVLVTLWII. The Cytoplasmic segment spans residues 395–401; that stretch reads DRLGRKK. The helical transmembrane segment at 402–422 threads the bilayer; the sequence is TMALCFVVFSFCSLLLFICVG. Residues 423 to 425 are Vesicular-facing; that stretch reads RNM. A helical membrane pass occupies residues 426 to 446; that stretch reads LTLLLFIARAFISGGFQAAYV. Residues 447–457 lie on the Cytoplasmic side of the membrane; sequence YTPEVYPTATR. Residues 458–478 traverse the membrane as a helical segment; that stretch reads ALGLGTCSGMARVGALITPFI. Over 479–489 the chain is Vesicular; that stretch reads AQVMLESSVYL. A helical membrane pass occupies residues 490–510; that stretch reads TLAVYSGCCLLAALASCFLPI. Residues 511–548 lie on the Cytoplasmic side of the membrane; sequence ETKGRGLQESSHREWGQEMVGRGAHGTGVARSNSGSQE. The interval 528-548 is disordered; that stretch reads EMVGRGAHGTGVARSNSGSQE. The residue at position 542 (S542) is a Phosphoserine.

This sequence belongs to the major facilitator superfamily. Detected in brain and adrenal medulla.

It localises to the cytoplasmic vesicle. The protein localises to the secretory vesicle. Its subcellular location is the synaptic vesicle membrane. The chain is Synaptic vesicle 2-related protein (SVOP) from Bos taurus (Bovine).